Here is a 958-residue protein sequence, read N- to C-terminus: Valine--tRNA ligase (958 aa).

The 'HIGH' region motif lies at 45–55; it reads PNVTGSLHMGH. Positions 571–575 match the 'KMSKS' region motif; it reads KMSKS. K574 is a binding site for ATP. Positions 892–958 form a coiled coil; that stretch reads AAERTRLDKE…EALERLKQAS (67 aa).

It belongs to the class-I aminoacyl-tRNA synthetase family. ValS type 1 subfamily. In terms of assembly, monomer.

The protein resides in the cytoplasm. It catalyses the reaction tRNA(Val) + L-valine + ATP = L-valyl-tRNA(Val) + AMP + diphosphate. Its function is as follows. Catalyzes the attachment of valine to tRNA(Val). As ValRS can inadvertently accommodate and process structurally similar amino acids such as threonine, to avoid such errors, it has a 'posttransfer' editing activity that hydrolyzes mischarged Thr-tRNA(Val) in a tRNA-dependent manner. The sequence is that of Valine--tRNA ligase from Bradyrhizobium diazoefficiens (strain JCM 10833 / BCRC 13528 / IAM 13628 / NBRC 14792 / USDA 110).